Reading from the N-terminus, the 181-residue chain is Small acidic protein (181 aa).

The segment at 1–181 (MSAARESHPH…KMMFVKSSGS (181 aa)) is disordered. Lys-13 is covalently cross-linked (Glycyl lysine isopeptide (Lys-Gly) (interchain with G-Cter in SUMO2)). Phosphoserine occurs at positions 15 and 17. Residues 48–78 (GKKEHTGRLVIGDHKSTSHFRTGEEDKKINE) are compositionally biased toward basic and acidic residues. Lys-62 is covalently cross-linked (Glycyl lysine isopeptide (Lys-Gly) (interchain with G-Cter in SUMO2)). Phosphoserine is present on Ser-63. Lys-75 participates in a covalent cross-link: Glycyl lysine isopeptide (Lys-Gly) (interchain with G-Cter in SUMO2). Ser-87, Ser-125, and Ser-145 each carry phosphoserine. A compositionally biased stretch (acidic residues) spans 106–147 (EVDDHDGEGDVAGDDDDDDSPDPESPDDSESDSESEKEESTE). The span at 151–169 (AAEHPDEVEDSKNKKDAKS) shows a compositional bias: basic and acidic residues. An N6-acetyllysine mark is found at Lys-172 and Lys-177.

It belongs to the SMAP family.

This chain is Small acidic protein (SMAP), found in Bos taurus (Bovine).